A 150-amino-acid chain; its full sequence is KLVVVFGATGAQGGSVARTLLEDGTFRVRVVTRNPEQKLLADLAKRLGLHYVVYSGLENIKKLAAGHFDGKGEVEEYFRKPEEYIGQNVGLSTCRTTPEEYEKLGFQGAQDLANMFRFYALKPDRNIDLTLRAQTLDQWLEQHKGDFAHL.

NADP(+) contacts are provided by residues 7-12, 33-37, and lysine 71; these read GATGAQ and RNPEQ.

The protein belongs to the NmrA-type oxidoreductase family. As to quaternary structure, homodimer. Interacts with ASS1. Interaction is enhanced by low NADPH/NADP(+) ratios, which results in inhibition of ASS1 activity.

The protein resides in the cytoplasm. Its subcellular location is the perinuclear region. The protein localises to the nucleus. Its function is as follows. Redox sensor protein. Undergoes restructuring and subcellular redistribution in response to changes in intracellular NADPH/NADP(+) levels. At low NADPH concentrations the protein is found mainly as a monomer, and binds argininosuccinate synthase (ASS1), the enzyme involved in nitric oxide synthesis. Association with ASS1 impairs its activity and reduces the production of nitric oxide, which subsecuently prevents apoptosis. Under normal NADPH concentrations, the protein is found as a dimer and hides the binding site for ASS1. The homodimer binds one molecule of NADPH. Has higher affinity for NADPH than for NADP(+). Binding to NADPH is necessary to form a stable dimer. This is NmrA-like family domain-containing protein 1 from Rattus norvegicus (Rat).